A 23-amino-acid polypeptide reads, in one-letter code: uncharacterized protein (23 aa).

The protein resides in the plastid. It is found in the chloroplast. This is an uncharacterized protein from Zea mays (Maize).